Here is a 140-residue protein sequence, read N- to C-terminus: Midkine (140 aa).

The first 22 residues, M1–A22, serve as a signal peptide directing secretion. Intrachain disulfides connect C34–C58, C42–C67, C49–C71, C81–C113, and C91–C123.

It belongs to the pleiotrophin family. Homodimer. Interacts with ALK. Interacts with LRP1; promotes neuronal survival. Interacts with LRP2. Interacts with NCAM1. Interacts (via C-terminal) with PTPRZ1 (via chondroitin sulfate chains); this interaction is inhibited by PTN; this interaction promotes neuronal migration. Interacts with NCL; this interaction promotes NCL clustering and lateral movements of this complex into lipid rafts leading to MDK internalization. Interacts with LRP6 and LRP8: this interaction is calcium dependent. Interacts with ITGA4. Interacts with ITGA6. Interacts with ITGB1. Interacts with ITGA4:ITGB1 complex; this interaction mediates MDK-induced osteoblast cells migration through PXN phosphorylation. Interacts with ITGA6:ITGB1 complex; this interaction mediates MDK-induced neurite outgrowth. Interacts with NOTCH2; this interactio mediates a nuclear accumulation of NOTCH2 and therefore activation of NOTCH2 signaling leading to interaction between HES1 and STAT3. Interacts with GPC2 (via heparan sulfate chain); this interaction is inhibited by heparin followed by chondroitin sulfate E; this interaction induces GPC2 clustering through heparan sulfate chain; this interaction induces neuronal cell adhesion and neurite outgrowth. Interacts with SDC3; this interaction induces SDC3 clustering; this interaction induces neuronal cell adhesion and neurite outgrowth. Interacts with SDC1. Interacts with CSPG5; this interaction promotes elongation of oligodendroglial precursor-like cells. Expressed in the follicular epithelium and granulosa cells of the ovary.

The protein localises to the secreted. Its function is as follows. Secreted protein that functions as a cytokine and growth factor and mediates its signal through cell-surface proteoglycan and non-proteoglycan receptors. Binds cell-surface proteoglycan receptors via their chondroitin sulfate (CS) groups. Thereby regulates many processes like inflammatory response, cell proliferation, cell adhesion, cell growth, cell survival, tissue regeneration, cell differentiation and cell migration. Participates in inflammatory processes by exerting two different activities. Firstly, mediates neutrophils and macrophages recruitment to the sites of inflammation both by direct action by cooperating namely with ITGB2 via LRP1 and by inducing chemokine expression. This inflammation can be accompanied by epithelial cell survival and smooth muscle cell migration after renal and vessel damage, respectively. Secondly, suppresses the development of tolerogenic dendric cells thereby inhibiting the differentiation of regulatory T cells and also promote T cell expansion through NFAT signaling and Th1 cell differentiation. Promotes tissue regeneration after injury or trauma. After heart damage negatively regulates the recruitment of inflammatory cells and mediates cell survival through activation of anti-apoptotic signaling pathways via MAPKs and AKT pathways through the activation of angiogenesis. Also facilitates liver regeneration as well as bone repair by recruiting macrophage at trauma site and by promoting cartilage development by facilitating chondrocyte differentiation. Plays a role in brain by promoting neural precursor cells survival and growth through interaction with heparan sulfate proteoglycans. Binds PTPRZ1 and promotes neuronal migration and embryonic neurons survival. Binds SDC3 or GPC2 and mediates neurite outgrowth and cell adhesion. Binds chondroitin sulfate E and heparin leading to inhibition of neuronal cell adhesion induced by binding with GPC2. Binds CSPG5 and promotes elongation of oligodendroglial precursor-like cells. Also binds ITGA6:ITGB1 complex; this interaction mediates MDK-induced neurite outgrowth. Binds LRP1; promotes neuronal survival. Binds ITGA4:ITGB1 complex; this interaction mediates MDK-induced osteoblast cells migration through PXN phosphorylation. Binds anaplastic lymphoma kinase (ALK) which induces ALK activation and subsequent phosphorylation of the insulin receptor substrate (IRS1), followed by the activation of mitogen-activated protein kinase (MAPK) and PI3-kinase, and the induction of cell proliferation. Promotes epithelial to mesenchymal transition through interaction with NOTCH2. During arteriogenesis, plays a role in vascular endothelial cell proliferation by inducing VEGFA expression and release which in turn induces nitric oxide synthase expression. Moreover activates vasodilation through nitric oxide synthase activation. Negatively regulates bone formation in response to mechanical load by inhibiting Wnt/beta-catenin signaling in osteoblasts. In addition plays a role in hippocampal development, working memory, auditory response, early fetal adrenal gland development and the female reproductive system. The polypeptide is Midkine (Mus musculus (Mouse)).